We begin with the raw amino-acid sequence, 224 residues long: 7-cyano-7-deazaguanine synthase (224 aa).

Residue 10–20 coordinates ATP; the sequence is LSGGLDSATVA. Zn(2+)-binding residues include cysteine 189, cysteine 199, cysteine 202, and cysteine 205.

Belongs to the QueC family. Zn(2+) serves as cofactor.

It catalyses the reaction 7-carboxy-7-deazaguanine + NH4(+) + ATP = 7-cyano-7-deazaguanine + ADP + phosphate + H2O + H(+). The protein operates within purine metabolism; 7-cyano-7-deazaguanine biosynthesis. Its function is as follows. Catalyzes the ATP-dependent conversion of 7-carboxy-7-deazaguanine (CDG) to 7-cyano-7-deazaguanine (preQ(0)). The sequence is that of 7-cyano-7-deazaguanine synthase from Azotobacter vinelandii (strain DJ / ATCC BAA-1303).